Here is a 327-residue protein sequence, read N- to C-terminus: Golgi to ER traffic protein 4 homolog (327 aa).

An N-acetylalanine modification is found at Ala2. Ser12 is subject to Phosphoserine. Residues Phe195 to Met271 form an interacts with BAG6 region. Residues Gly307 to Asp327 are disordered.

It belongs to the GET4 family. In terms of assembly, component of the BAG6/BAT3 complex, at least composed of BAG6, UBL4A and GET4/TRC35. Interacts with BAG6; the interaction is direct and localizes BAG6 to the cytosol. Interacts with GET3. In terms of processing, ubiquitinated by RNF12, leading to proteasomal degradation. When unassembled from BAG6; ubiquitinylation is modulated by BAG6 quality control role and effectuated by RNF126.

The protein resides in the cytoplasm. It is found in the cytosol. In terms of biological role, as part of a cytosolic protein quality control complex, the BAG6/BAT3 complex, maintains misfolded and hydrophobic patches-containing proteins in a soluble state and participates in their proper delivery to the endoplasmic reticulum or alternatively can promote their sorting to the proteasome where they undergo degradation. The BAG6/BAT3 complex is involved in the post-translational delivery of tail-anchored/type II transmembrane proteins to the endoplasmic reticulum membrane. Recruited to ribosomes, it interacts with the transmembrane region of newly synthesized tail-anchored proteins and together with SGTA and ASNA1 mediates their delivery to the endoplasmic reticulum. Client proteins that cannot be properly delivered to the endoplasmic reticulum are ubiquitinated and sorted to the proteasome. Similarly, the BAG6/BAT3 complex also functions as a sorting platform for proteins of the secretory pathway that are mislocalized to the cytosol either delivering them to the proteasome for degradation or to the endoplasmic reticulum. The BAG6/BAT3 complex also plays a role in the endoplasmic reticulum-associated degradation (ERAD), a quality control mechanism that eliminates unwanted proteins of the endoplasmic reticulum through their retrotranslocation to the cytosol and their targeting to the proteasome. It maintains these retrotranslocated proteins in an unfolded yet soluble state condition in the cytosol to ensure their proper delivery to the proteasome. The chain is Golgi to ER traffic protein 4 homolog from Homo sapiens (Human).